The following is a 426-amino-acid chain: CAAX prenyl protease 1 homolog (426 aa).

The Lumenal segment spans residues 1 to 3 (MVN). Residues 4–24 (YFIISISFFLLEHFYSFYLNF) traverse the membrane as a helical segment. Residues 25–70 (RQSKLLKNLTKVPEYCKDRITQEDFKKSQEYSKAKLDYKTLTSTIQ) are Cytoplasmic-facing. The helical transmembrane segment at 71–91 (VLTTLLSFYYPVYPYFWNLSL) threads the bilayer. The Lumenal segment spans residues 92–106 (ELAEKIGYPNEIIRS). The chain crosses the membrane as a helical span at residues 107 to 127 (CFFFAFTVGVSVITEIPFSYY). The Cytoplasmic segment spans residues 128–150 (YQFILEEKFGYNRMTRTLFIKDK). The chain crosses the membrane as a helical span at residues 151-171 (IISTLLMIGFGLPILSLAIFI). The Lumenal portion of the chain corresponds to 172 to 178 (INWSGPQ). Residues 179-199 (LWFYCWLLLVAITLLSITIYP) traverse the membrane as a helical segment. Topologically, residues 200-294 (TFIQPLFNKF…GHYKMSHTLK (95 aa)) are cytoplasmic. His-282 contributes to the Zn(2+) binding site. Residue Glu-283 is part of the active site. His-286 provides a ligand contact to Zn(2+). A helical transmembrane segment spans residues 295 to 315 (QMLLVQVHLVTLLYAFSLLIN). Over 316-333 (DDQLYQQFGFVSSKDSVL) the chain is Lumenal. A helical membrane pass occupies residues 334-354 (VGLTLFMFLYSPIDRIFSLLI). Topologically, residues 355 to 426 (NIFSRKYEFQ…KVALYKLKNK (72 aa)) are cytoplasmic. Glu-362 lines the Zn(2+) pocket.

It belongs to the peptidase M48B family. Zn(2+) serves as cofactor.

The protein resides in the endoplasmic reticulum membrane. The catalysed reaction is Hydrolyzes the peptide bond -P2-(S-farnesyl or geranylgeranyl)C-P1'-P2'-P3'-COOH where P1' and P2' are amino acids with aliphatic side chains and P3' is any C-terminal residue.. Proteolytically removes the C-terminal three residues of farnesylated proteins. This chain is CAAX prenyl protease 1 homolog (zmpste24), found in Dictyostelium discoideum (Social amoeba).